The primary structure comprises 313 residues: MTSMLEIYSGCRACSYDYLSVLYEQYFRKNGIEAKYVGTLVRPTDSQKFLIDDILHGSHELMRQRKKVDFFRGDSVLYPWYDFHIDSILIVPSNWNAEQYSKYFRKTYVLPHFVNDDAVEMIVRNEERLKEDKLRNIQYSFLTIGHNNDFDRKGIVLAKRLMDRLGISNKLVCYSNEPFCHKEHRLTEVGKYREYYRAKFYVSLSYSESFGMTPFEAMAVGTPVIYPNCHAYAEYFKGEVGLPINCQGHSIMRIGDKDYNVWYFDIDEAKEIIQYADSMSDEEYIDMSIKTFEFAKQFYARNIIPKLIEIMKS.

Belongs to the glycosyltransferase group 1 family. Glycosyltransferase 4 subfamily.

The polypeptide is Putative glycosyltransferase ORF313 (Acidianus hospitalis (AFV-1)).